The following is a 754-amino-acid chain: 5-methyltetrahydropteroyltriglutamate--homocysteine methyltransferase (754 aa).

5-methyltetrahydropteroyltri-L-glutamate contacts are provided by residues 17–20 and K117; that span reads RELK. Residues 431–433 and E484 contribute to the L-homocysteine site; that span reads IGS. L-methionine-binding positions include 431–433 and E484; that span reads IGS. 5-methyltetrahydropteroyltri-L-glutamate is bound by residues 515–516 and W561; that span reads RC. D599 lines the L-homocysteine pocket. D599 provides a ligand contact to L-methionine. E605 is a binding site for 5-methyltetrahydropteroyltri-L-glutamate. Zn(2+)-binding residues include H641, C643, and E665. H694 (proton donor) is an active-site residue. A Zn(2+)-binding site is contributed by C726.

It belongs to the vitamin-B12 independent methionine synthase family. The cofactor is Zn(2+).

The enzyme catalyses 5-methyltetrahydropteroyltri-L-glutamate + L-homocysteine = tetrahydropteroyltri-L-glutamate + L-methionine. It participates in amino-acid biosynthesis; L-methionine biosynthesis via de novo pathway; L-methionine from L-homocysteine (MetE route): step 1/1. In terms of biological role, catalyzes the transfer of a methyl group from 5-methyltetrahydrofolate to homocysteine resulting in methionine formation. This chain is 5-methyltetrahydropteroyltriglutamate--homocysteine methyltransferase, found in Klebsiella pneumoniae subsp. pneumoniae (strain ATCC 700721 / MGH 78578).